A 616-amino-acid chain; its full sequence is Dihydroxy-acid dehydratase (616 aa).

Asp-81 lines the Mg(2+) pocket. Residue Cys-122 participates in [2Fe-2S] cluster binding. Residues Asp-123 and Lys-124 each coordinate Mg(2+). The residue at position 124 (Lys-124) is an N6-carboxylysine. Cys-195 provides a ligand contact to [2Fe-2S] cluster. Mg(2+) is bound at residue Glu-491. Catalysis depends on Ser-517, which acts as the Proton acceptor.

The protein belongs to the IlvD/Edd family. As to quaternary structure, homodimer. The cofactor is [2Fe-2S] cluster. Mg(2+) is required as a cofactor.

It carries out the reaction (2R)-2,3-dihydroxy-3-methylbutanoate = 3-methyl-2-oxobutanoate + H2O. It catalyses the reaction (2R,3R)-2,3-dihydroxy-3-methylpentanoate = (S)-3-methyl-2-oxopentanoate + H2O. It functions in the pathway amino-acid biosynthesis; L-isoleucine biosynthesis; L-isoleucine from 2-oxobutanoate: step 3/4. It participates in amino-acid biosynthesis; L-valine biosynthesis; L-valine from pyruvate: step 3/4. Functionally, functions in the biosynthesis of branched-chain amino acids. Catalyzes the dehydration of (2R,3R)-2,3-dihydroxy-3-methylpentanoate (2,3-dihydroxy-3-methylvalerate) into 2-oxo-3-methylpentanoate (2-oxo-3-methylvalerate) and of (2R)-2,3-dihydroxy-3-methylbutanoate (2,3-dihydroxyisovalerate) into 2-oxo-3-methylbutanoate (2-oxoisovalerate), the penultimate precursor to L-isoleucine and L-valine, respectively. In Salmonella newport (strain SL254), this protein is Dihydroxy-acid dehydratase.